Here is a 116-residue protein sequence, read N- to C-terminus: L-amino-acid oxidase BjussuLAAO-II (116 aa).

An FAD-binding site is contributed by 42–45; sequence GPMR. Residues Arg45 and His78 each coordinate substrate.

Belongs to the flavin monoamine oxidase family. FIG1 subfamily. In terms of assembly, homodimer; non-covalently linked. FAD serves as cofactor. In terms of processing, glycosylated. Expressed by the venom gland.

It is found in the secreted. The enzyme catalyses an L-alpha-amino acid + O2 + H2O = a 2-oxocarboxylate + H2O2 + NH4(+). It carries out the reaction L-leucine + O2 + H2O = 4-methyl-2-oxopentanoate + H2O2 + NH4(+). It catalyses the reaction L-phenylalanine + O2 + H2O = 3-phenylpyruvate + H2O2 + NH4(+). The catalysed reaction is L-methionine + O2 + H2O = 4-methylsulfanyl-2-oxobutanoate + H2O2 + NH4(+). The enzyme catalyses L-isoleucine + O2 + H2O = (S)-3-methyl-2-oxopentanoate + H2O2 + NH4(+). It carries out the reaction L-histidine + O2 + H2O = 3-(imidazol-5-yl)pyruvate + H2O2 + NH4(+). It catalyses the reaction L-tyrosine + O2 + H2O = 3-(4-hydroxyphenyl)pyruvate + H2O2 + NH4(+). The catalysed reaction is L-tryptophan + O2 + H2O = indole-3-pyruvate + H2O2 + NH4(+). Its enzymatic activities is reduced by the presence of Zn(2+), Al(3+), Cu(2+), Na(+) or Ni(2+) salts. Catalyzes an oxidative deamination of predominantly hydrophobic and aromatic L-amino acids, thus producing hydrogen peroxide that may contribute to the diverse toxic effects of this enzyme. Shows very high enzymatic activity on L-Met and L-Leu, high activity on L-Ile, L-Phe and L-Tyr and moderate activity on L-His. Exhibits diverse biological activities, such as hemorrhage, hemolysis, edema, apoptosis of vascular endothelial cells or tumor cell lines, and antibacterial, as well as regulation of platelet aggregation. Effects of snake L-amino oxidases on platelets are controversial, since they either induce aggregation or inhibit agonist-induced aggregation. These different effects are probably due to different experimental conditions. In vitro, has a strong antiprotozoal effect against Leishmania amazonensis (IC(50)=4.56 ug/mL) and Trypanosoma cruzi (IC(50)=4.85 ug/mL). It also causes cell death and DNA damage in hepatocarcinoma cells (HepG2) in vitro by inducing oxidative stress. It exerts cytotoxicity towards colorectal adenocarcinomahuman cells (Caco-2) by acting on multiple intracellular targets. It diminishes cell viability by decreasing mitochondrial activity, the activity of acid phosphatases, and lysosomal function. In addition, it increases intracellular levels of reactive oxygen species and DNA damage, it elevates the expression of the pro-inflammatory cytokine genes TNF and IL6, and lowers the expression of the apoptotic-related genes. Also induces cytotoxicity (IC(50)=1.80 ug/mL) and apoptosis in MCF-7 cells (a human breast adeno-carcinoma cell line) by activating the intrinsic and extrinsic apoptosis pathways, but are not cytotoxic towards MCF-10A cells (a non-tumorigenic human breast epithelial cell line). The chain is L-amino-acid oxidase BjussuLAAO-II from Bothrops jararacussu (Jararacussu).